Here is a 70-residue protein sequence, read N- to C-terminus: ATP synthase subunit c (70 aa).

2 consecutive transmembrane segments (helical) span residues 4 to 24 (IAAGIAMFGAALGAGIGNGLV) and 47 to 67 (FIGVGLIESMPIISFVVALMV).

This sequence belongs to the ATPase C chain family. As to quaternary structure, F-type ATPases have 2 components, F(1) - the catalytic core - and F(0) - the membrane proton channel. F(1) has five subunits: alpha(3), beta(3), gamma(1), delta(1), epsilon(1). F(0) has three main subunits: a(1), b(2) and c(10-14). The alpha and beta chains form an alternating ring which encloses part of the gamma chain. F(1) is attached to F(0) by a central stalk formed by the gamma and epsilon chains, while a peripheral stalk is formed by the delta and b chains.

It is found in the cell membrane. Functionally, f(1)F(0) ATP synthase produces ATP from ADP in the presence of a proton or sodium gradient. F-type ATPases consist of two structural domains, F(1) containing the extramembraneous catalytic core and F(0) containing the membrane proton channel, linked together by a central stalk and a peripheral stalk. During catalysis, ATP synthesis in the catalytic domain of F(1) is coupled via a rotary mechanism of the central stalk subunits to proton translocation. Its function is as follows. Key component of the F(0) channel; it plays a direct role in translocation across the membrane. A homomeric c-ring of between 10-14 subunits forms the central stalk rotor element with the F(1) delta and epsilon subunits. The polypeptide is ATP synthase subunit c (Lactiplantibacillus plantarum (strain ATCC BAA-793 / NCIMB 8826 / WCFS1) (Lactobacillus plantarum)).